The following is a 1270-amino-acid chain: Myosin-3 (1270 aa).

Positions 1 to 20 (MAVIKKGARRKDVKEPKKRS) are disordered. A Myosin motor domain is found at 36-715 (VGVSDLTLLS…SLFALEDMRD (680 aa)). 129-136 (GESGAGKT) provides a ligand contact to ATP. Serine 357 bears the Phosphoserine mark. An actin-binding region spans residues 404-486 (SIGILDIYGF…PGILAAMNDS (83 aa)). IQ domains lie at 719–739 (YNMAARIQRAWRRFLQRRIDA) and 740–765 (AIKIQRTIREKKGGNKYVKLRDYGTK). In terms of domain architecture, TH1 spans 771–961 (KERRSMSLLG…TIYVRRGHPA (191 aa)). Disordered stretches follow at residues 951-1015 (STIY…QKPV), 1029-1136 (YNPK…GSSS), and 1215-1270 (VQFG…DDDW). Residues 980-1000 (IKSKKSKHKSTHKHTHSHRSH) are compositionally biased toward basic residues. The span at 1066-1078 (KKASSSHKSSSAK) shows a compositional bias: low complexity. Basic and acidic residues predominate over residues 1089–1098 (GVEKNKEPLK). The span at 1107-1116 (PIPPPPPPMG) shows a compositional bias: pro residues. Positions 1118–1180 (PKDPKFEAAY…PTAYMTPYKD (63 aa)) constitute an SH3 domain. Positions 1215–1234 (VQFGSATVGPTSDNQSNPVG) are enriched in polar residues. Acidic residues predominate over residues 1256-1270 (ADDDDNDDGDDDDDW).

Belongs to the TRAFAC class myosin-kinesin ATPase superfamily. Myosin family. Interacts (via myosin motor domain) with SHE4; this interaction is important for proper localization and may regulate the interaction of the motor domain with actin. Interacts (via SH3 domain) with VRP1; this interaction is required for localization to sites of polarized growth and may regulate the interaction of the tail domain with actin. Interacts (via SH3 domain) with PAN1; this interaction is important for late stages of endocytopsis. Interacts (via SH3 domain) with BBC1 and LAS17. Interacts (via C-terminal acidic tail) with ARC19 and ARC40; ARC19 and ARC40 are Arp2/3 complex subunits. Post-translationally, phosphorylation of the TEDS site (Ser-357) is required for the polarization of the actin cytoskeleton and for ligand-induced, but not for constitutive internalization of STE2. Phosphorylation probably activates the myosin-I ATPase. Ser-357 is phosphorylated by CLA4 and STE20 in vitro.

The protein resides in the cytoplasm. It localises to the cytoskeleton. It is found in the actin patch. One of two redundant type-I myosins implicated in the organization of the actin cytoskeleton. Required for proper actin cytoskeleton polarization and for the internalization step in endocytosis. At the cell cortex, assembles in patch-like structures together with proteins from the actin-polymerizing machinery and promotes actin assembly. Functions redundantly with LAS17 as actin nucleation-promoting factor (NPF) for the Arp2/3 complex. Motor domain phosphorylation by PAK kinases CLA4 and STE20 promotes CDC42-regulated actin assembly. Functions together with the NPF PAN1 in late stages of endocytosis. Motor domain phosphorylation by PDK1 kinases PKH1 and PKH2, and by SGK kinases YPK1 and YPK2, promotes ligand-induced, but not constitutive endocytosis of the G protein-coupled receptor STE2. The protein is Myosin-3 (MYO3) of Saccharomyces cerevisiae (strain YJM789) (Baker's yeast).